Here is an 86-residue protein sequence, read N- to C-terminus: UPF0473 protein Clos_1662 (86 aa).

It belongs to the UPF0473 family.

In Alkaliphilus oremlandii (strain OhILAs) (Clostridium oremlandii (strain OhILAs)), this protein is UPF0473 protein Clos_1662.